The chain runs to 472 residues: Adenosylhomocysteinase (472 aa).

3 residues coordinate substrate: T62, D137, and E197. Position 198-200 (198-200 (TTT)) interacts with NAD(+). Substrate-binding residues include K227 and D231. NAD(+) is bound by residues N232, 261–266 (GYGDVG), E284, N319, 340–342 (IGH), and N385.

The protein belongs to the adenosylhomocysteinase family. The cofactor is NAD(+).

The protein resides in the cytoplasm. The enzyme catalyses S-adenosyl-L-homocysteine + H2O = L-homocysteine + adenosine. The protein operates within amino-acid biosynthesis; L-homocysteine biosynthesis; L-homocysteine from S-adenosyl-L-homocysteine: step 1/1. May play a key role in the regulation of the intracellular concentration of adenosylhomocysteine. In Bordetella pertussis (strain Tohama I / ATCC BAA-589 / NCTC 13251), this protein is Adenosylhomocysteinase.